Consider the following 120-residue polypeptide: NAD(P)H-quinone oxidoreductase subunit 3, chloroplastic (120 aa).

3 consecutive transmembrane segments (helical) span residues 9–29, 64–84, and 88–108; these read IFWA…LISA, MFAL…PWAM, and VLGV…IVGL.

This sequence belongs to the complex I subunit 3 family. As to quaternary structure, NDH is composed of at least 16 different subunits, 5 of which are encoded in the nucleus.

The protein localises to the plastid. The protein resides in the chloroplast thylakoid membrane. The enzyme catalyses a plastoquinone + NADH + (n+1) H(+)(in) = a plastoquinol + NAD(+) + n H(+)(out). The catalysed reaction is a plastoquinone + NADPH + (n+1) H(+)(in) = a plastoquinol + NADP(+) + n H(+)(out). NDH shuttles electrons from NAD(P)H:plastoquinone, via FMN and iron-sulfur (Fe-S) centers, to quinones in the photosynthetic chain and possibly in a chloroplast respiratory chain. The immediate electron acceptor for the enzyme in this species is believed to be plastoquinone. Couples the redox reaction to proton translocation, and thus conserves the redox energy in a proton gradient. The polypeptide is NAD(P)H-quinone oxidoreductase subunit 3, chloroplastic (Citrus sinensis (Sweet orange)).